A 263-amino-acid chain; its full sequence is Protein IQ-DOMAIN 9 (263 aa).

The disordered stretch occupies residues 16 to 41 (SKQGTEKKKTSAVKPKKGSKKKGTSL). The short motif at 21–28 (EKKKTSAV) is the Nuclear localization signal 1 element. Residues 25-38 (TSAVKPKKGSKKKG) are compositionally biased toward basic residues. Residues 46–75 (EDWAATRIQTAFKAYKARKSLRRLKGIARA) form the IQ domain. Residues 59–78 (AYKARKSLRRLKGIARAKLS) form a calmodulin-binding region. The short motif at 107-114 (ARRVCMVT) is the Nuclear localization signal 2 element. The disordered stretch occupies residues 216–263 (TPKKPKSSKTDSNSPAKRTVSLSSVPAKTPFPGARNTVKPRRLSFPGA). Residues 226-241 (DSNSPAKRTVSLSSVP) show a composition bias toward polar residues.

It belongs to the IQD family. As to quaternary structure, binds to multiple calmodulin (CaM) in the presence of Ca(2+) and CaM-like proteins.

It localises to the nucleus. Its subcellular location is the nuclear body. Its function is as follows. May be involved in cooperative interactions with calmodulins or calmodulin-like proteins. Recruits calmodulin proteins to microtubules, thus being a potential scaffold in cellular signaling and trafficking. May associate with nucleic acids and regulate gene expression at the transcriptional or post-transcriptional level. The sequence is that of Protein IQ-DOMAIN 9 from Arabidopsis thaliana (Mouse-ear cress).